The following is a 210-amino-acid chain: uncharacterized protein (210 aa).

The 90-residue stretch at 2–91 (SRHPEVKWAQ…AEAKWWKKLV (90 aa)) folds into the CS domain. A disordered region spans residues 165-210 (GMGGMGGMDEFEDESDDEEEVSKPQDAEKAAEAGKSQESDAKTETS). Residues 173 to 184 (DEFEDESDDEEE) are compositionally biased toward acidic residues. The span at 185–210 (VSKPQDAEKAAEAGKSQESDAKTETS) shows a compositional bias: basic and acidic residues.

This is an uncharacterized protein from Oryza sativa subsp. indica (Rice).